We begin with the raw amino-acid sequence, 1001 residues long: E3 ubiquitin-protein ligase etc-1 (1001 aa).

An IQ domain is found at 28-57; the sequence is QEKAARKVQKFWRGHRVQHNQRLLFRAEFD. The stretch at 66–115 forms a coiled coil; that stretch reads LEETIKMAQLLVNFYETNKDEERLVMTLSELVKLKTSDKEFEKRIRETQR. Residues 658–1001 enclose the HECT domain; that stretch reads KVNDLKSMVR…INSGAGFELA (344 aa). Cys-969 acts as the Glycyl thioester intermediate in catalysis.

In terms of assembly, interacts with ify-1 and cyb-1.

It catalyses the reaction S-ubiquitinyl-[E2 ubiquitin-conjugating enzyme]-L-cysteine + [acceptor protein]-L-lysine = [E2 ubiquitin-conjugating enzyme]-L-cysteine + N(6)-ubiquitinyl-[acceptor protein]-L-lysine.. It functions in the pathway protein modification; protein ubiquitination. In terms of biological role, E3 ubiquitin-protein ligase that accepts ubiquitin from E2 ubiquitin-conjugating enzymes, such as ubc-18, in the form of a thioester and then directly transfers the ubiquitin to targeted substrates. Ubiquitinates ify-1 and cyb-1 targeting them for degradation in post-meiotic embryos. The chain is E3 ubiquitin-protein ligase etc-1 from Caenorhabditis elegans.